The chain runs to 918 residues: Signal transduction histidine-protein kinase BarA (918 aa).

The Cytoplasmic segment spans residues 1 to 10 (MTNYSLRARM). Residues 11–31 (MILILAPTVLIGLLLSIFFVV) traverse the membrane as a helical segment. Topologically, residues 32 to 175 (HRYNDLQRQL…LKSVRLQQYK (144 aa)) are periplasmic. Residues 176–196 (EIFISCVMMLFCIGIALIFGW) traverse the membrane as a helical segment. The Cytoplasmic portion of the chain corresponds to 197–918 (RLMRDVTGPI…VAREASKILG (722 aa)). The region spanning 200-252 (RDVTGPIRNMVNTVDRIRRGQLDSRVEGFMLGELDMLKNGINSMAMSLAAYHE) is the HAMP domain. Residues 299–520 (NMSHELRTPL…TFWFHINLDL (222 aa)) form the Histidine kinase domain. The residue at position 302 (His-302) is a Phosphohistidine; by autocatalysis. Positions 669–785 (TVMAVDDNPA…RLHNLLLRYK (117 aa)) constitute a Response regulatory domain. Position 718 is a 4-aspartylphosphate (Asp-718). One can recognise an HPt domain in the interval 822-918 (KTDLARDMLQ…VAREASKILG (97 aa)). A Phosphohistidine modification is found at His-861.

Activation requires a sequential transfer of a phosphate group from a His in the primary transmitter domain, to an Asp in the receiver domain and to a His in the secondary transmitter domain.

It localises to the cell inner membrane. The enzyme catalyses ATP + protein L-histidine = ADP + protein N-phospho-L-histidine.. Its function is as follows. Member of the two-component regulatory system UvrY/BarA involved in the regulation of carbon metabolism via the CsrA/CsrB regulatory system. Phosphorylates UvrY, probably via a four-step phosphorelay. This is Signal transduction histidine-protein kinase BarA (barA) from Shigella flexneri.